Consider the following 411-residue polypeptide: Protrudin (411 aa).

The disordered stretch occupies residues 1 to 27 (MQTSEREGSGPELSPSVMPEAPLESPP). Residues 1–66 (MQTSEREGSG…AGDGVRYLLR (66 aa)) are Cytoplasmic-facing. The tract at residues 1–92 (MQTSEREGSG…LFLTLNEGAW (92 aa)) is sufficient for homooligomerization. The segment at 1 to 205 (MQTSEREGSG…LYLLPLCWVL (205 aa)) is sufficient for localization to endoplasmic reticulum tubular network and for interactions with REEP1, REEP5, ATL1, ATL2, ATL3 and SPAST. The interval 51-64 (LEPLKDAGDGVRYL) is necessary for interaction with RAB11A and function in neurite outgrowth. A helical transmembrane segment spans residues 67 to 87 (WQMPLCSLLTCLGLNVLFLTL). Residue Asn-88 is a topological domain, lumenal. Residues 89–109 (EGAWYSVGALMISVPALLGYL) traverse the membrane as a helical segment. At 110–187 (QEVCRARLPD…NPVVSSQFYG (78 aa)) the chain is on the cytoplasmic side. An intramembrane region (helical) is located at residues 188–208 (ALLGTVCMLYLLPLCWVLTLL). Residues 209–411 (NSTLFLGNVE…CASCNQTLSK (203 aa)) are Cytoplasmic-facing. Positions 234-286 (MNPKQEEHAFESPPPPDVGGKDGLMDSTPALTPTEDLTPGSVEEAEEAEPDEE) are disordered. Positions 271–361 (TPGSVEEAEE…GCSATFSVLK (91 aa)) are necessary for interaction with KIF5A. A compositionally biased stretch (acidic residues) spans 276–286 (EEAEEAEPDEE). Residues 286–292 (EFKDAIE) form a necessary for interaction with VAPA and function in cell projections formation region. The segment at 344 to 410 (TNNFGNCTGC…VCASCNQTLS (67 aa)) adopts an FYVE-type zinc-finger fold. Positions 350, 353, 366, 369, 374, 377, 402, and 405 each coordinate Zn(2+).

Can form homooligomers (monomers, dimers and tetramers). Interacts with RAB11A (GDP-bound form); regulates RAB11A. Interacts with FKBP8; may negatively regulate ZFYVE27 phosphorylation. Interacts with VAPA (via MSP domain); may regulate ZFYVE27 retention in the endoplasmic reticulum and its function in cell projections formation. Interacts with VAPB (via MSP domain). Interacts with REEP1, REEP5 and ATL1. Interacts with ATL2, ATL3 and SPAST. Interacts with KIF5A and RTN3. Interacts with RAB11B (GDP-bound form), SURF4, KIF5B and KIF5C. In terms of processing, phosphorylated. Phosphorylation is induced by NGF through the MAPK/ERK pathway and modulates interaction with RAB11A.

The protein localises to the recycling endosome membrane. It localises to the endoplasmic reticulum membrane. Its subcellular location is the cell projection. The protein resides in the growth cone membrane. Its function is as follows. Key regulator of RAB11-dependent vesicular trafficking during neurite extension through polarized membrane transport. Promotes axonal elongation and contributes to the establishment of neuronal cell polarity. Involved in nerve growth factor-induced neurite formation in VAPA-dependent manner. Contributes to both the formation and stabilization of the tubular ER network. Involved in ER morphogenesis by regulating the sheet-to-tubule balance and possibly the density of tubule interconnections. Acts as an adapter protein and facilitates the interaction of KIF5A with VAPA, VAPB, SURF4, RAB11A, RAB11B and RTN3 and the ZFYVE27-KIF5A complex contributes to the transport of these proteins in neurons. Can induce formation of neurite-like membrane protrusions in non-neuronal cells in a KIF5A/B-dependent manner. This chain is Protrudin (ZFYVE27), found in Homo sapiens (Human).